The following is an 831-amino-acid chain: Probable inactive serine/threonine-protein kinase DDB_G0274613 (831 aa).

The RING-type zinc finger occupies 9 to 63 (CSICSEEVIDFAAIFSSNKKFGDKACKHNFCVSCLTYLMEYNTRNKKALCCPICR). The stretch at 83 to 348 (RKLSSAQIFL…LEEMKLLYQF (266 aa)) forms a coiled coil. The Protein kinase domain maps to 414 to 787 (QIHKVSIGNG…ANQAAFHKFF (374 aa)). Residues 657–703 (NNNNNNNNNNNNNNNNNNNNNNNNNNNNNNNNNNNNNNNNNIESNFN) form a disordered region.

The protein belongs to the protein kinase superfamily. CMGC Ser/Thr protein kinase family.

This chain is Probable inactive serine/threonine-protein kinase DDB_G0274613, found in Dictyostelium discoideum (Social amoeba).